The primary structure comprises 257 residues: 7-carboxy-7-deazaguanine synthase (257 aa).

The disordered stretch occupies residues 1–25; sequence MKSVDHPVDVLPAEHSAETPGDARA. Substrate is bound by residues 39-41 and Arg-54; that span reads RQG. A Radical SAM core domain is found at 45-244; it reads LTGTESVFIR…AISRGYQYCD (200 aa). 3 residues coordinate [4Fe-4S] cluster: Cys-58, Cys-62, and Cys-65. Thr-67 is a Mg(2+) binding site. Residue Thr-99 coordinates substrate. S-adenosyl-L-methionine-binding positions include Gly-101 and 143-145; that span reads SPK.

Belongs to the radical SAM superfamily. 7-carboxy-7-deazaguanine synthase family. Homodimer. The cofactor is [4Fe-4S] cluster. Requires S-adenosyl-L-methionine as cofactor. Mg(2+) serves as cofactor.

The enzyme catalyses 6-carboxy-5,6,7,8-tetrahydropterin + H(+) = 7-carboxy-7-deazaguanine + NH4(+). The protein operates within purine metabolism; 7-cyano-7-deazaguanine biosynthesis. In terms of biological role, catalyzes the complex heterocyclic radical-mediated conversion of 6-carboxy-5,6,7,8-tetrahydropterin (CPH4) to 7-carboxy-7-deazaguanine (CDG), a step common to the biosynthetic pathways of all 7-deazapurine-containing compounds. This is 7-carboxy-7-deazaguanine synthase from Rhodopirellula baltica (strain DSM 10527 / NCIMB 13988 / SH1).